The primary structure comprises 107 residues: MRDMMGMMKQAKELQAKMKAMQDEIATMEASASSGGGLVTVTLSGKGTLSALKIDPSLMKEDEVEILEDLIIAAHNDAKAKLEAAMAEKTQSLTAGLPIPPGFKLPF.

The protein belongs to the YbaB/EbfC family. As to quaternary structure, homodimer.

It localises to the cytoplasm. Its subcellular location is the nucleoid. Its function is as follows. Binds to DNA and alters its conformation. May be involved in regulation of gene expression, nucleoid organization and DNA protection. This is Nucleoid-associated protein BAbS19_I00290 from Brucella abortus (strain S19).